A 131-amino-acid chain; its full sequence is Leptin receptor overlapping transcript-like 1 (131 aa).

4 helical membrane-spanning segments follow: residues 7 to 27, 32 to 52, 69 to 89, and 100 to 120; these read LISL…GCAL, QYWP…YCIA, LAIF…VVFA, and ALVL…FLVF.

It belongs to the OB-RGRP/VPS55 family. As to quaternary structure, interacts with RAB13.

The protein localises to the membrane. Functionally, negatively regulates growth hormone (GH) receptor cell surface expression in liver. May play a role in liver resistance to GH during periods of reduced nutrient availability. This Rattus norvegicus (Rat) protein is Leptin receptor overlapping transcript-like 1 (Leprotl1).